The following is a 765-amino-acid chain: MAASQGGGGNSGGGGCGGGGSSGGCGTAGGGGGGAGGGGGGGGGTLVVPIPVPTLFGQPFPNGPPWNPGSLQPQHTVRSLDRALEEAGSSGILSLSGRKLRDFPGSGYDLTDTTQADLSRNRFTEIPSDVWLFAPLETLNLYHNCIKTIPEAIKNLQMLTYLNISRNLLSTLPKYLFDLPLKVLVVSNNKLVSIPEEIGKLKDLMELDISCNEIQVLPQQMGKLHSLRELNIRRNNLHVLPDELGDLPLVKLDFSCNKVTEIPVCYRKLHHLQVIILDNNPLQVPPAQICLKGKVHIFKYLNIQACCRMDKKPDSLDLPSLSKRMPSQPLTDSMEDFYPNKNHGPDSGIGSDNGEKRLSTTEPSDDDTVSLHSQVSESNREQTSRNDSHIIGSKTDSQKDQEVYDFVDPNTEDVAVPEQGNAHIGSFVSFFKGKEKCSEKSRKNEELGDEKRLEKEQLLAEEEDDDLKEVTDLRKIAAQLLQQEQKNRILNHSTSVMRNKPKQTVECEKSVSADEVNSPLSPLTWQPLENQKDQIDEQPWPESHPIIWQSEERRRSKQIRKEYFKYKSMRKSSSGNENDEQDSDNANMSTQSPVSSEEYDRTDGFSHSPFGLKPRSAFSRSSRQEYGAADPGFTMRRKMEHLREEREQIRQLRNNLESRLKVILPDDIGAALMDGVVLCHLANHIRPRSVASIHVPSPAVPKLSMAKCRRNVENFLDACKKLGVSQERLCLPHHILEERGLVKVGVTVQALLELPTTKASQLSVA.

Disordered regions lie at residues 1–39 (MAAS…GGGG) and 55–76 (LFGQ…PQHT). LRR repeat units follow at residues 89–110 (SSGI…GYDL), 112–133 (DTTQ…VWLF), 135–156 (PLET…IKNL), 158–179 (MLTY…LFDL), 180–201 (PLKV…IGKL), 203–224 (DLME…MGKL), 226–248 (SLRE…GDLP), 249–269 (LVKL…YRKL), and 271–292 (HLQV…ICLK). Residues 316-401 (LDLPSLSKRM…GSKTDSQKDQ (86 aa)) are disordered. Basic and acidic residues predominate over residues 378-388 (SNREQTSRNDS). Positions 438 to 472 (SEKSRKNEELGDEKRLEKEQLLAEEEDDDLKEVTD) form a coiled coil. Disordered stretches follow at residues 498 to 552 (RNKP…QSEE) and 565 to 628 (KYKS…EYGA). Over residues 503–512 (QTVECEKSVS) the composition is skewed to basic and acidic residues. Polar residues-rich tracts occupy residues 518–529 (SPLSPLTWQPLE) and 584–595 (DNANMSTQSPVS). The region spanning 642–755 (LREEREQIRQ…VTVQALLELP (114 aa)) is the Calponin-homology (CH) domain.

Its function is as follows. May play a role in the organization of the cytoskeleton. The protein is Leucine-rich repeat and calponin homology domain-containing protein 2 (LRCH2) of Homo sapiens (Human).